The primary structure comprises 515 residues: Calcium-dependent protein kinase 2 (515 aa).

Residues 1-51 are disordered; that stretch reads MGNCCPGSGDAEPASSDASTGNGSSSFKAGASPSSAPAQNKPPAPIGPVLG. Gly-2 carries N-myristoyl glycine lipidation. The segment covering 14-38 has biased composition (low complexity); sequence ASSDASTGNGSSSFKAGASPSSAPA. The region spanning 61–319 is the Protein kinase domain; it reads YTIGKELGRG…AYEVLNHPWI (259 aa). ATP contacts are provided by residues 67–75 and Lys-90; that span reads LGRGQFGVT. Asp-185 functions as the Proton acceptor in the catalytic mechanism. An autoinhibitory domain region spans residues 325–355; it reads APDTPLDNAVMNRLKQFRAMNQFKKAALRVI. 4 EF-hand domains span residues 362-397, 398-433, 434-469, and 473-504; these read EEIR…QGTK, LTEA…MNRM, DREE…KGLL, and DIKD…GNPE. Ca(2+) is bound by residues Asp-375, Asp-377, Ser-379, Thr-381, Glu-386, Asp-411, Asp-413, Asn-415, Thr-417, Glu-422, Asp-447, Asp-449, Ser-451, Cys-453, Glu-458, Asp-482, Asp-484, Asp-486, Arg-488, and Glu-493.

This sequence belongs to the protein kinase superfamily. Ser/Thr protein kinase family. CDPK subfamily. As to expression, expressed in heading panicles, spikelets and mature pollen grains.

It is found in the membrane. The catalysed reaction is L-seryl-[protein] + ATP = O-phospho-L-seryl-[protein] + ADP + H(+). The enzyme catalyses L-threonyl-[protein] + ATP = O-phospho-L-threonyl-[protein] + ADP + H(+). With respect to regulation, activated by calcium. Autophosphorylation may play an important role in the regulation of the kinase activity. Functionally, may play a role in signal transduction pathways that involve calcium as a second messenger. This is Calcium-dependent protein kinase 2 from Oryza sativa subsp. japonica (Rice).